We begin with the raw amino-acid sequence, 277 residues long: Large ribosomal subunit protein uL2 (277 aa).

A disordered region spans residues 226–277; that stretch reads MNPVDHPHGGGEGRSPIGMPSPVTPWGKPTLGYKTRKPNKKSDRLIVSRRKK.

It belongs to the universal ribosomal protein uL2 family. Part of the 50S ribosomal subunit. Forms a bridge to the 30S subunit in the 70S ribosome.

Functionally, one of the primary rRNA binding proteins. Required for association of the 30S and 50S subunits to form the 70S ribosome, for tRNA binding and peptide bond formation. It has been suggested to have peptidyltransferase activity; this is somewhat controversial. Makes several contacts with the 16S rRNA in the 70S ribosome. This Symbiobacterium thermophilum (strain DSM 24528 / JCM 14929 / IAM 14863 / T) protein is Large ribosomal subunit protein uL2.